A 239-amino-acid polypeptide reads, in one-letter code: UDP-2,3-diacylglucosamine hydrolase (239 aa).

5 residues coordinate Mn(2+): Asp-9, His-11, Asp-42, Asn-80, and His-115. Substrate is bound at residue 80–81; sequence NR. Substrate-binding residues include Asp-123, Ser-161, Lys-165, Lys-168, and His-196. Residues His-196 and His-198 each contribute to the Mn(2+) site.

Belongs to the LpxH family. Mn(2+) is required as a cofactor.

Its subcellular location is the cell inner membrane. It catalyses the reaction UDP-2-N,3-O-bis[(3R)-3-hydroxytetradecanoyl]-alpha-D-glucosamine + H2O = 2-N,3-O-bis[(3R)-3-hydroxytetradecanoyl]-alpha-D-glucosaminyl 1-phosphate + UMP + 2 H(+). It functions in the pathway glycolipid biosynthesis; lipid IV(A) biosynthesis; lipid IV(A) from (3R)-3-hydroxytetradecanoyl-[acyl-carrier-protein] and UDP-N-acetyl-alpha-D-glucosamine: step 4/6. Hydrolyzes the pyrophosphate bond of UDP-2,3-diacylglucosamine to yield 2,3-diacylglucosamine 1-phosphate (lipid X) and UMP by catalyzing the attack of water at the alpha-P atom. Involved in the biosynthesis of lipid A, a phosphorylated glycolipid that anchors the lipopolysaccharide to the outer membrane of the cell. In Pasteurella multocida (strain Pm70), this protein is UDP-2,3-diacylglucosamine hydrolase.